Here is a 491-residue protein sequence, read N- to C-terminus: Ribosome biogenesis protein YTM1 (491 aa).

The ubiquitin-like (UBL) domain stretch occupies residues 8–103; sequence IKIKFTTNES…EAFLTIEYTR (96 aa). The tract at residues 113–491 is sufficient for interaction with ERB1 and association with 66S pre-ribosomes; that stretch reads SFQNDDWISS…QINKGSDISK (379 aa). WD repeat units follow at residues 128–167, 169–207, 241–280, 318–358, 360–399, 409–449, and 456–491; these read RNLS…EKQY, GHSA…VVDQ, GHKA…MAKI, GHTE…CVDT, TTGF…SNTN, GHTN…SLYT, and STKS…DISK. The segment at 205–228 is disordered; the sequence is VDQNEEDEEENEANEGDDGDNDME. Residues 207 to 225 show a composition bias toward acidic residues; it reads QNEEDEEENEANEGDDGDN.

The protein belongs to the WD repeat WDR12/YTM1 family. Component of the NOP7 complex, composed of ERB1, NOP7 and YTM1. The complex is held together by ERB1, which interacts with NOP7 via its N-terminal domain and with YTM1 via a high-affinity interaction between the seven-bladed beta-propeller domains of the 2 proteins. The NOP7 complex associates with the 66S pre-ribosome. Interacts (via UBL domain) with MDN1 (via VWFA/MIDAS domain).

It is found in the nucleus. The protein resides in the nucleolus. The protein localises to the nucleoplasm. Its function is as follows. Component of the NOP7 complex, which is required for maturation of the 25S and 5.8S ribosomal RNAs and formation of the 60S ribosome. The chain is Ribosome biogenesis protein YTM1 from Lodderomyces elongisporus (strain ATCC 11503 / CBS 2605 / JCM 1781 / NBRC 1676 / NRRL YB-4239) (Yeast).